Reading from the N-terminus, the 158-residue chain is NAD(P)H-quinone oxidoreductase subunit J, chloroplastic (158 aa).

This sequence belongs to the complex I 30 kDa subunit family. NDH is composed of at least 16 different subunits, 5 of which are encoded in the nucleus.

The protein resides in the plastid. The protein localises to the chloroplast thylakoid membrane. The enzyme catalyses a plastoquinone + NADH + (n+1) H(+)(in) = a plastoquinol + NAD(+) + n H(+)(out). It carries out the reaction a plastoquinone + NADPH + (n+1) H(+)(in) = a plastoquinol + NADP(+) + n H(+)(out). Its function is as follows. NDH shuttles electrons from NAD(P)H:plastoquinone, via FMN and iron-sulfur (Fe-S) centers, to quinones in the photosynthetic chain and possibly in a chloroplast respiratory chain. The immediate electron acceptor for the enzyme in this species is believed to be plastoquinone. Couples the redox reaction to proton translocation, and thus conserves the redox energy in a proton gradient. In Drimys granadensis, this protein is NAD(P)H-quinone oxidoreductase subunit J, chloroplastic.